Reading from the N-terminus, the 280-residue chain is Succinate dehydrogenase [ubiquinone] iron-sulfur subunit, mitochondrial (280 aa).

A mitochondrion-targeting transit peptide spans 1-28; it reads MAAVVALSLRRRLPATTLGGACLQASRG. The 2Fe-2S ferredoxin-type domain maps to 40-133; sequence KKFAIYRWDP…VSKIYPLPHM (94 aa). Lysine 51 and lysine 55 each carry N6-acetyllysine. [2Fe-2S] cluster is bound by residues cysteine 93, cysteine 98, cysteine 101, and cysteine 113. The tract at residues 146–218 is interaction with SDHAF1; the sequence is FYAQYKSIEP…PAVLMQAYRW (73 aa). The region spanning 176–206 is the 4Fe-4S ferredoxin-type domain; the sequence is EREKLDGLYECILCACCSTSCPSYWWNGDKY. [4Fe-4S] cluster contacts are provided by cysteine 186, cysteine 189, and cysteine 192. Cysteine 196 is a binding site for [3Fe-4S] cluster. Tryptophan 201 contacts a ubiquinone. Positions 243 and 249 each coordinate [3Fe-4S] cluster. Cysteine 253 provides a ligand contact to [4Fe-4S] cluster.

The protein belongs to the succinate dehydrogenase/fumarate reductase iron-sulfur protein family. As to quaternary structure, component of complex II composed of four subunits: the flavoprotein (FP) SDHA, iron-sulfur protein (IP) SDHB, and a cytochrome b560 composed of SDHC and SDHD. Interacts with SDHAF1; the interaction is required for iron-sulfur cluster incorporation into SDHB. (Microbial infection) Interacts with JC virus small t antigen. The cofactor is [2Fe-2S] cluster. It depends on [3Fe-4S] cluster as a cofactor. [4Fe-4S] cluster serves as cofactor.

It is found in the mitochondrion inner membrane. The enzyme catalyses a quinone + succinate = fumarate + a quinol. It catalyses the reaction (R)-malate + a quinone = enol-oxaloacetate + a quinol. It carries out the reaction (S)-malate + a quinone = enol-oxaloacetate + a quinol. It participates in carbohydrate metabolism; tricarboxylic acid cycle; fumarate from succinate (eukaryal route): step 1/1. With respect to regulation, enol-oxaloacetate inhibits the succinate dehydrogenase activity. In terms of biological role, iron-sulfur protein (IP) subunit of the succinate dehydrogenase complex (mitochondrial respiratory chain complex II), responsible for transferring electrons from succinate to ubiquinone (coenzyme Q). SDH also oxidizes malate to the non-canonical enol form of oxaloacetate, enol-oxaloacetate. Enol-oxaloacetate, which is a potent inhibitor of the succinate dehydrogenase activity, is further isomerized into keto-oxaloacetate. The protein is Succinate dehydrogenase [ubiquinone] iron-sulfur subunit, mitochondrial (SDHB) of Homo sapiens (Human).